Consider the following 183-residue polypeptide: uncharacterized protein (183 aa).

This is an uncharacterized protein from Saccharolobus islandicus (Sulfolobus islandicus).